Here is a 768-residue protein sequence, read N- to C-terminus: 5-methyltetrahydropteroyltriglutamate--homocysteine methyltransferase (768 aa).

Residues 17-20 (RELK) and lysine 117 contribute to the 5-methyltetrahydropteroyltri-L-glutamate site. L-homocysteine contacts are provided by residues 442–444 (IGS) and glutamate 495. Residues 442-444 (IGS) and glutamate 495 each bind L-methionine. Residues 526–527 (RC) and tryptophan 572 contribute to the 5-methyltetrahydropteroyltri-L-glutamate site. Aspartate 610 is a binding site for L-homocysteine. Aspartate 610 is a binding site for L-methionine. Glutamate 616 is a binding site for 5-methyltetrahydropteroyltri-L-glutamate. Residues histidine 653, cysteine 655, and glutamate 677 each contribute to the Zn(2+) site. Residue histidine 706 is the Proton donor of the active site. Residue cysteine 738 coordinates Zn(2+).

The protein belongs to the vitamin-B12 independent methionine synthase family. Requires Zn(2+) as cofactor.

It catalyses the reaction 5-methyltetrahydropteroyltri-L-glutamate + L-homocysteine = tetrahydropteroyltri-L-glutamate + L-methionine. The protein operates within amino-acid biosynthesis; L-methionine biosynthesis via de novo pathway; L-methionine from L-homocysteine (MetE route): step 1/1. In terms of biological role, catalyzes the transfer of a methyl group from 5-methyltetrahydrofolate to homocysteine resulting in methionine formation. The sequence is that of 5-methyltetrahydropteroyltriglutamate--homocysteine methyltransferase from Bifidobacterium adolescentis (strain ATCC 15703 / DSM 20083 / NCTC 11814 / E194a).